Here is a 479-residue protein sequence, read N- to C-terminus: Neuronal acetylcholine receptor subunit alpha-9 (479 aa).

An N-terminal signal peptide occupies residues 1–22 (MNWSHSCISFCWIYFAASRLRA). Over 23-238 (AETADGKYAQ…FTLLLKRRSS (216 aa)) the chain is Extracellular. Residue asparagine 57 is glycosylated (N-linked (GlcNAc...) asparagine). Cysteine 155 and cysteine 169 are joined by a disulfide. Asparagine 170 carries an N-linked (GlcNAc...) asparagine glycan. Residues serine 191 and aspartate 193 each contribute to the Na(+) site. Cysteine 219 and cysteine 220 are oxidised to a cystine. 3 consecutive transmembrane segments (helical) span residues 239–259 (FYIVNLLIPCVLISFLAPLSF), 269–289 (VSLGVTILLAMTVFQLMVAEI), and 303–323 (YIATMALITASTALTIMVMNI). At 324-457 (HFCGAEARPV…WKKVAKVIDR (134 aa)) the chain is on the cytoplasmic side. Residues 458–478 (FFMWIFFIMVFVMTILIIARA) form a helical membrane-spanning segment.

The protein belongs to the ligand-gated ion channel (TC 1.A.9) family. Acetylcholine receptor (TC 1.A.9.1) subfamily. Alpha-9/CHRNA9 sub-subfamily. In terms of assembly, forms homo- or heteropentameric channels in conjunction with CHRNA10. The native outer hair cell receptor is composed of CHRNA9:CHRNA10 heterooligomers. Found in the stoichiometric form (CHRNA9)2:(CHRNA10)3. N-glycosylated. As to expression, expressed in cochlea, keratinocytes, pituitary gland, B-cells and T-cells.

Its subcellular location is the synaptic cell membrane. The protein resides in the cell membrane. The enzyme catalyses Ca(2+)(in) = Ca(2+)(out). The catalysed reaction is K(+)(in) = K(+)(out). It catalyses the reaction Na(+)(in) = Na(+)(out). It carries out the reaction Mg(2+)(in) = Mg(2+)(out). Its activity is regulated as follows. Activated by a myriad of ligands such as acetylcholine. AChR activity is inhibited by the antagonist alpha-conotoxins RgIA and GeXXA, small disulfide-constrained peptides from cone snails. In terms of biological role, component of neuronal acetylcholine receptors (nAChRs) that function as pentameric, ligand-gated cation channels with high calcium permeability among other activities. nAChRs are excitatory neurotrasnmitter receptors formed by a collection of nAChR subunits known to mediate synaptic transmission in the nervous system and the neuromuscular junction. Each nAchR subunit confers differential attributes to channel properties, including activation, deactivation and desensitization kinetics, pH sensitivity, cation permeability, and binding to allosteric modulators. Forms either homopentamers or heteropentamers with CHRNA10. Expressed in the inner ear, in sympathetic neurons and in other non-neuronal cells, such as skin keratinocytes and lymphocytes. nAChR formed by CHRNA9:CHRNA10 mediate central nervous system control of auditory and vestibular sensory processing. The channel is permeable to a range of divalent cations including calcium, the influx of which may activate a potassium current which hyperpolarizes the cell membrane. In the ear, mediates synaptic transmission between efferent olivocochlear fibers and hair cells of the cochlea, this may lead to a reduction in basilar membrane motion, altering the activity of auditory nerve fibers and reducing the range of dynamic hearing. This may protect against acoustic trauma. May also regulate keratinocyte adhesion. The polypeptide is Neuronal acetylcholine receptor subunit alpha-9 (Homo sapiens (Human)).